Consider the following 346-residue polypeptide: Alkanal monooxygenase alpha chain (346 aa).

In terms of assembly, heterodimer of an alpha and a beta chain.

The catalysed reaction is a long-chain fatty aldehyde + FMNH2 + O2 = a long-chain fatty acid + hnu + FMN + H2O + 2 H(+). Functionally, light-emitting reaction in luminous bacteria. The protein is Alkanal monooxygenase alpha chain (luxA) of Photobacterium phosphoreum.